The sequence spans 132 residues: Protein MrkF (132 aa).

It is found in the fimbrium. Functionally, appears to affect the stability of the intact fimbriae on the cell surface. This chain is Protein MrkF (mrkF), found in Klebsiella pneumoniae.